The following is a 262-amino-acid chain: Acyl-[acyl-carrier-protein]--UDP-N-acetylglucosamine O-acyltransferase (262 aa).

The protein belongs to the transferase hexapeptide repeat family. LpxA subfamily. As to quaternary structure, homotrimer.

It is found in the cytoplasm. It catalyses the reaction a (3R)-hydroxyacyl-[ACP] + UDP-N-acetyl-alpha-D-glucosamine = a UDP-3-O-[(3R)-3-hydroxyacyl]-N-acetyl-alpha-D-glucosamine + holo-[ACP]. The protein operates within glycolipid biosynthesis; lipid IV(A) biosynthesis; lipid IV(A) from (3R)-3-hydroxytetradecanoyl-[acyl-carrier-protein] and UDP-N-acetyl-alpha-D-glucosamine: step 1/6. In terms of biological role, involved in the biosynthesis of lipid A, a phosphorylated glycolipid that anchors the lipopolysaccharide to the outer membrane of the cell. The protein is Acyl-[acyl-carrier-protein]--UDP-N-acetylglucosamine O-acyltransferase of Paracidovorax citrulli (strain AAC00-1) (Acidovorax citrulli).